The following is a 317-amino-acid chain: Protein phosphatase 1 regulatory subunit 3C (317 aa).

The PP1-binding motif signature appears at 84–87; the sequence is RVVF. The tract at residues 141 to 263 is interaction with EPM2A; sequence PSSDYLSFRD…YRIVHVQWKP (123 aa). Residues 149-257 enclose the CBM21 domain; that stretch reads RDRFQKNFVC…NNEAQNYRIV (109 aa).

In terms of assembly, interacts with PPP1CC catalytic subunit of PP1 and associates with glycogen. Forms complexes with glycogen phosphorylase, glycogen synthase and phosphorylase kinase which is necessary for its regulation of PP1 activity. Also interacts with EPM2A/laforin. In terms of processing, ubiquitinated by NHLRC1/malin in a EPM2A/laforin-dependent manner.

Acts as a glycogen-targeting subunit for PP1 and regulates its activity. Activates glycogen synthase, reduces glycogen phosphorylase activity and limits glycogen breakdown. Dramatically increases basal and insulin-stimulated glycogen synthesis upon overexpression in a variety of cell types. The chain is Protein phosphatase 1 regulatory subunit 3C from Rattus norvegicus (Rat).